Consider the following 300-residue polypeptide: GTPase Era (300 aa).

The region spanning 8-176 (RCGYVAIVGR…ESLIASHLPE (169 aa)) is the Era-type G domain. Positions 16–23 (GRPNVGKS) are G1. 16–23 (GRPNVGKS) contacts GTP. The tract at residues 42-46 (QTTRH) is G2. Residues 63-66 (DTPG) form a G3 region. GTP is bound by residues 63–67 (DTPGM) and 125–128 (NKTD). The tract at residues 125–128 (NKTD) is G4. The interval 155-157 (ISA) is G5. Residues 199-283 (VREKIMRQLG…MLNLWVKVKG (85 aa)) form the KH type-2 domain.

The protein belongs to the TRAFAC class TrmE-Era-EngA-EngB-Septin-like GTPase superfamily. Era GTPase family. In terms of assembly, monomer.

Its subcellular location is the cytoplasm. It is found in the cell inner membrane. An essential GTPase that binds both GDP and GTP, with rapid nucleotide exchange. Plays a role in 16S rRNA processing and 30S ribosomal subunit biogenesis and possibly also in cell cycle regulation and energy metabolism. The sequence is that of GTPase Era from Pseudomonas syringae pv. tomato (strain ATCC BAA-871 / DC3000).